The sequence spans 502 residues: Keratin, type II microfibrillar, component 5 (502 aa).

At Ser1 the chain carries Blocked amino end (Ser). Residues 1–122 form a head region; the sequence is SCRSYRISPG…PNAQCVKHQE (122 aa). Residues 122–433 form the IF rod domain; sequence EKEQIKNLNS…RLLEGEEQRL (312 aa). The tract at residues 123 to 157 is coil 1A; that stretch reads KEQIKNLNSRFAAFIDKVRFLEQQNKLLETKWQFY. The interval 158–167 is linker 1; it reads QNQRCCESNL. The coil 1B stretch occupies residues 168–268; the sequence is EPLFNGYIET…YDEEIQILNA (101 aa). Lys228 is covalently cross-linked (Glycyl lysine isopeptide (Lys-Gly) (interchain with G-Cter in SUMO1)). Residues 269–285 form a linker 12 region; sequence HISDTSVIVKMDNSRDL. The tract at residues 286-429 is coil 2; the sequence is NMDCVVAEIK…ATYRRLLEGE (144 aa). The tract at residues 430 to 502 is tail; the sequence is EQRLCEGVGS…CGSSRSVRFA (73 aa).

Belongs to the intermediate filament family. As to expression, hard keratin wool.

Wool microfibrillar keratin. This chain is Keratin, type II microfibrillar, component 5, found in Ovis aries (Sheep).